The sequence spans 331 residues: Glycerol-3-phosphate dehydrogenase [NAD(P)+] (331 aa).

The NADPH site is built by Ser10, Trp11, and Lys101. Sn-glycerol 3-phosphate contacts are provided by Lys101, Gly132, and Ser134. Ala136 contacts NADPH. 5 residues coordinate sn-glycerol 3-phosphate: Lys188, Asp241, Ser251, Arg252, and Asn253. Lys188 functions as the Proton acceptor in the catalytic mechanism. Arg252 provides a ligand contact to NADPH. The NADPH site is built by Val276 and Glu278.

It belongs to the NAD-dependent glycerol-3-phosphate dehydrogenase family.

The protein localises to the cytoplasm. The catalysed reaction is sn-glycerol 3-phosphate + NAD(+) = dihydroxyacetone phosphate + NADH + H(+). It carries out the reaction sn-glycerol 3-phosphate + NADP(+) = dihydroxyacetone phosphate + NADPH + H(+). It functions in the pathway membrane lipid metabolism; glycerophospholipid metabolism. In terms of biological role, catalyzes the reduction of the glycolytic intermediate dihydroxyacetone phosphate (DHAP) to sn-glycerol 3-phosphate (G3P), the key precursor for phospholipid synthesis. The protein is Glycerol-3-phosphate dehydrogenase [NAD(P)+] of Acholeplasma laidlawii (strain PG-8A).